A 122-amino-acid polypeptide reads, in one-letter code: Large ribosomal subunit protein uL22 (122 aa).

Belongs to the universal ribosomal protein uL22 family. Part of the 50S ribosomal subunit.

Its function is as follows. This protein binds specifically to 23S rRNA; its binding is stimulated by other ribosomal proteins, e.g. L4, L17, and L20. It is important during the early stages of 50S assembly. It makes multiple contacts with different domains of the 23S rRNA in the assembled 50S subunit and ribosome. In terms of biological role, the globular domain of the protein is located near the polypeptide exit tunnel on the outside of the subunit, while an extended beta-hairpin is found that lines the wall of the exit tunnel in the center of the 70S ribosome. The chain is Large ribosomal subunit protein uL22 from Thermosynechococcus vestitus (strain NIES-2133 / IAM M-273 / BP-1).